Reading from the N-terminus, the 468-residue chain is Aspartate ammonia-lyase (468 aa).

L-aspartate contacts are provided by Thr-99, Ser-138, Thr-139, Asn-140, and Thr-185. Residues 315–324 are SS loop; sequence GSSIMPGKVN. Ser-316 serves as the catalytic Proton acceptor. Residues Ser-317 and Lys-322 each coordinate L-aspartate.

Belongs to the class-II fumarase/aspartase family. Aspartase subfamily. As to quaternary structure, homotetramer.

The enzyme catalyses L-aspartate = fumarate + NH4(+). Catalyzes the reversible conversion of L-aspartate to fumarate and ammonia. The polypeptide is Aspartate ammonia-lyase (aspA) (Helicobacter pylori (strain J99 / ATCC 700824) (Campylobacter pylori J99)).